The chain runs to 246 residues: tRNA pseudouridine synthase A (246 aa).

The active-site Nucleophile is the Asp-51. Position 105 (Tyr-105) interacts with substrate.

This sequence belongs to the tRNA pseudouridine synthase TruA family.

It carries out the reaction uridine(38/39/40) in tRNA = pseudouridine(38/39/40) in tRNA. Its function is as follows. Formation of pseudouridine at positions 38, 39 and 40 in the anticodon stem and loop of transfer RNAs. This Thermoplasma volcanium (strain ATCC 51530 / DSM 4299 / JCM 9571 / NBRC 15438 / GSS1) protein is tRNA pseudouridine synthase A.